The following is a 71-amino-acid chain: Beta-defensin 9 (71 aa).

A signal peptide spans 1 to 23; sequence MRTLCSLLLICCLLFSYDTPVVG. Cystine bridges form between C37/C66, C44/C59, and C49/C67.

The protein belongs to the beta-defensin family.

Its subcellular location is the secreted. Functionally, has antibacterial activity. This is Beta-defensin 9 (Defb9) from Rattus norvegicus (Rat).